Here is a 471-residue protein sequence, read N- to C-terminus: 7-dehydrocholesterol reductase (471 aa).

The interval 1 to 23 (MASKSQHNAPKVKSPNGKAGSQG) is disordered. Ser14 carries the post-translational modification Phosphoserine. The next 8 membrane-spanning stretches (helical) occupy residues 36-56 (LASIIFLLLFAPFIVYYFIMA), 95-115 (LYALWVSFQVLLYSWLPDFCH), 144-164 (LQAWLITHILWFVNAYLLSWF), 173-193 (WIPLLWCANILGYAVSTFAMI), 233-253 (LFFNGRPGIVAWTLINLSFAA), 262-282 (VTNSMILVNVLQAIYVLDFFW), 302-322 (LGWGDCVWLPYLYTLQGLYLV), and 327-347 (QLSTPNALGILLLGLVGYYIF). NADP(+) contacts are provided by residues Lys354, Arg358, Leu391, Trp396, and 403–404 (NY). Residues 416–436 (LACGGGHLLPYFYIIYMTILL) traverse the membrane as a helical segment. Residues Asp443, 447-451 (CANKY), and Tyr458 contribute to the NADP(+) site.

This sequence belongs to the ERG4/ERG24 family. Interacts with DHCR24; this interaction regulates DHCR7 activity. Interacts with TMEM147.

The protein localises to the endoplasmic reticulum membrane. It carries out the reaction cholesterol + NADP(+) = 7-dehydrocholesterol + NADPH + H(+). It catalyses the reaction 7-dehydrodesmosterol + NADPH + H(+) = desmosterol + NADP(+). The catalysed reaction is 5,6alpha-epoxy-5alpha-cholestan-3beta-ol + H2O = 5alpha-cholestane-3beta,5,6beta-triol. The enzyme catalyses 5,6beta-epoxy-5beta-cholestan-3beta-ol + H2O = 5alpha-cholestane-3beta,5,6beta-triol. It functions in the pathway steroid biosynthesis; cholesterol biosynthesis. Oxidoreductase that catalyzes the last step of the cholesterol synthesis pathway, which transforms cholesta-5,7-dien-3beta-ol (7-dehydrocholesterol,7-DHC) into cholesterol by reducing the C7-C8 double bond of its sterol core. Can also metabolize cholesta-5,7,24-trien-3beta-ol (7-dehydrodemosterol, 7-DHD) to desmosterol, which is then metabolized by the Delta(24)-sterol reductase (DHCR24) to cholesterol. Modulates ferroptosis (a form of regulated cell death driven by iron-dependent lipid peroxidation) through the metabolic breakdown of the anti-ferroptotic metabolites 7-DHC and 7-DHD which, when accumulated, divert the propagation of peroxyl radical-mediated damage from phospholipid components to its sterol core, protecting plasma and mitochondrial membranes from phospholipid autoxidation. Functionally, component of the microsomal antiestrogen binding site (AEBS), a multiproteic complex at the ER membrane that consists of an association between cholestenol Delta-isomerase/EBP and DHCR7. This complex is responsible for cholesterol-5,6-epoxide hydrolase (ChEH) activity, which consists in the hydration of cholesterol-5,6-epoxides (5,6-EC) into cholestane-3beta,5alpha,6beta-triol (CT). The precise role of each component of this complex has not been described yet. The chain is 7-dehydrocholesterol reductase (Dhcr7) from Mus musculus (Mouse).